The sequence spans 440 residues: 3-phosphoshikimate 1-carboxyvinyltransferase (440 aa).

3-phosphoshikimate contacts are provided by lysine 26, serine 27, and arginine 31. Lysine 26 contacts phosphoenolpyruvate. Residues glycine 99 and arginine 127 each contribute to the phosphoenolpyruvate site. Residues serine 172, glutamine 174, aspartate 320, and lysine 347 each contribute to the 3-phosphoshikimate site. Residue glutamine 174 coordinates phosphoenolpyruvate. Catalysis depends on aspartate 320, which acts as the Proton acceptor. Phosphoenolpyruvate is bound by residues arginine 351 and arginine 392.

Belongs to the EPSP synthase family. Monomer.

The protein localises to the cytoplasm. The catalysed reaction is 3-phosphoshikimate + phosphoenolpyruvate = 5-O-(1-carboxyvinyl)-3-phosphoshikimate + phosphate. It participates in metabolic intermediate biosynthesis; chorismate biosynthesis; chorismate from D-erythrose 4-phosphate and phosphoenolpyruvate: step 6/7. Its function is as follows. Catalyzes the transfer of the enolpyruvyl moiety of phosphoenolpyruvate (PEP) to the 5-hydroxyl of shikimate-3-phosphate (S3P) to produce enolpyruvyl shikimate-3-phosphate and inorganic phosphate. The polypeptide is 3-phosphoshikimate 1-carboxyvinyltransferase (Xanthomonas axonopodis pv. citri (strain 306)).